A 545-amino-acid chain; its full sequence is Indole-3-pyruvate decarboxylase (545 aa).

Glu48 is a binding site for thiamine diphosphate. Residues 382–460 form a thiamine pyrophosphate binding region; that stretch reads DCLFTAMDMI…VILFNNASWE (79 aa). Mg(2+) is bound by residues Asp429 and Asn456.

The protein belongs to the TPP enzyme family. A metal cation is required as a cofactor. It depends on thiamine diphosphate as a cofactor.

It carries out the reaction indole-3-pyruvate + H(+) = indole-3-acetaldehyde + CO2. It participates in plant hormone metabolism; auxin biosynthesis. This Azospirillum brasilense protein is Indole-3-pyruvate decarboxylase (ipdC).